Reading from the N-terminus, the 1192-residue chain is Homeodomain-interacting protein kinase 3 (1192 aa).

Lys27 is covalently cross-linked (Glycyl lysine isopeptide (Lys-Gly) (interchain with G-Cter in SUMO); alternate). Lys27 is covalently cross-linked (Glycyl lysine isopeptide (Lys-Gly) (interchain with G-Cter in SUMO2); alternate). Positions 197–525 (YEVLDFLGRG…PIETLNHPFV (329 aa)) constitute a Protein kinase domain. ATP contacts are provided by residues 203–211 (LGRGTFGQV) and Lys226. Asp322 (proton acceptor) is an active-site residue. Tyr359 carries the post-translational modification Phosphotyrosine. The interaction with AR stretch occupies residues 767 to 921 (QNRSNSLQNT…NSMSDDEQES (155 aa)). Residues 775–868 (NTNIPHSAFI…SPRPSLRECK (94 aa)) are interaction with FAS. Residues 799–829 (CVDTQDNHTSEGEAGTCREASVRQDSSVSDK) are disordered. The interval 832–988 (QTIIIADSPS…ESGLSVDEHM (157 aa)) is required for localization to nuclear speckles. Positions 843–895 (AVSVITISSDSDDEETSPRPSLRECKGSLDCEACQSTLNIDRMCSLSSPDSTL) are SUMO interaction motifs (SIM); required for nuclear localization and kinase activity. Residues 847 to 857 (ITISSDSDDEE) form an interaction with UBL1 region. The span at 889–906 (SSPDSTLSTSSSGQSSPS) shows a compositional bias: low complexity. Disordered regions lie at residues 889–943 (SSPD…PFAE) and 956–1023 (LGTC…KPAA). Lys1185 is covalently cross-linked (Glycyl lysine isopeptide (Lys-Gly) (interchain with G-Cter in SUMO)).

Belongs to the protein kinase superfamily. CMGC Ser/Thr protein kinase family. HIPK subfamily. In terms of assembly, interacts with UBL1/SUMO-1. Interacts with and stabilizes ligand-bound androgen receptor (AR). Interacts with Nkx1-2. Interacts with FAS and DAXX. Probably part of a complex consisting of HIPK3, FAS and FADD. Binds to NR5A1/SF1, SPEN/MINT and RUNX2. Post-translationally, autophosphorylated, but autophosphorylation is not required for catalytic activity. In terms of processing, may be sumoylated. In terms of tissue distribution, heart, skeletal muscle, spleen, testis and lung.

The protein resides in the cytoplasm. The protein localises to the nucleus. It catalyses the reaction L-seryl-[protein] + ATP = O-phospho-L-seryl-[protein] + ADP + H(+). The enzyme catalyses L-threonyl-[protein] + ATP = O-phospho-L-threonyl-[protein] + ADP + H(+). In terms of biological role, serine/threonine-protein kinase involved in transcription regulation, apoptosis and steroidogenic gene expression. Phosphorylates JUN and RUNX2. Seems to negatively regulate apoptosis by promoting FADD phosphorylation. Enhances androgen receptor-mediated transcription. May act as a transcriptional corepressor for NK homeodomain transcription factors. The phosphorylation of NR5A1 activates SF1 leading to increased steroidogenic gene expression upon cAMP signaling pathway stimulation. In osteoblasts, supports transcription activation: phosphorylates RUNX2 that synergizes with SPEN/MINT to enhance FGFR2-mediated activation of the osteocalcin FGF-responsive element (OCFRE). This Mus musculus (Mouse) protein is Homeodomain-interacting protein kinase 3 (Hipk3).